A 75-amino-acid polypeptide reads, in one-letter code: Pi-hexatoxin-Hi1b (75 aa).

6 cysteine pairs are disulfide-bonded: cysteine 3–cysteine 18, cysteine 10–cysteine 23, cysteine 17–cysteine 33, cysteine 40–cysteine 55, cysteine 47–cysteine 60, and cysteine 54–cysteine 71. Domain repeat units lie at residues 3–33 (CIRK…FEVC) and 40–71 (CLVK…SSVC). Residues 3–71 (CIRKWLSCVD…KRSGNKSSVC (69 aa)) are 2 X approximate repeats with cysteine pattern C-C-CC-C-C.

The protein belongs to the psalmotoxin-1 family. Double-knot toxin subfamily. In terms of tissue distribution, expressed by the venom gland.

Its subcellular location is the secreted. In terms of biological role, this toxin potently and selectively inhibits ASIC1a, an isoform of the gene ASIC1. It incompletely inhibits ASIC1a activation in a pH-independent and slowly reversible manner. This toxin acts by binding to and stabilizing the closed state of the channel, thereby impeding the transition into a conducting state. This toxin may bind to the acidic pocket of ASIC1a, since mutation of a key residue of this pocket (Arg-350) abolishes the ability of the toxin to inhibit ASIC1a. In vivo, this toxin protects the brain from neuronal injury when administered up to 8 hours after stroke onset. The polypeptide is Pi-hexatoxin-Hi1b (Hadronyche infensa (Fraser island funnel-web spider)).